The sequence spans 194 residues: Peptidyl-tRNA hydrolase (194 aa).

Tyrosine 19 contributes to the tRNA binding site. Histidine 24 (proton acceptor) is an active-site residue. Positions 69, 71, and 117 each coordinate tRNA.

The protein belongs to the PTH family. Monomer.

The protein localises to the cytoplasm. The enzyme catalyses an N-acyl-L-alpha-aminoacyl-tRNA + H2O = an N-acyl-L-amino acid + a tRNA + H(+). In terms of biological role, hydrolyzes ribosome-free peptidyl-tRNAs (with 1 or more amino acids incorporated), which drop off the ribosome during protein synthesis, or as a result of ribosome stalling. Its function is as follows. Catalyzes the release of premature peptidyl moieties from peptidyl-tRNA molecules trapped in stalled 50S ribosomal subunits, and thus maintains levels of free tRNAs and 50S ribosomes. The chain is Peptidyl-tRNA hydrolase from Neorickettsia sennetsu (strain ATCC VR-367 / Miyayama) (Ehrlichia sennetsu).